The primary structure comprises 244 residues: 5-oxoprolinase subunit A (244 aa).

It belongs to the LamB/PxpA family. In terms of assembly, forms a complex composed of PxpA, PxpB and PxpC.

The catalysed reaction is 5-oxo-L-proline + ATP + 2 H2O = L-glutamate + ADP + phosphate + H(+). Catalyzes the cleavage of 5-oxoproline to form L-glutamate coupled to the hydrolysis of ATP to ADP and inorganic phosphate. This is 5-oxoprolinase subunit A from Escherichia coli O7:K1 (strain IAI39 / ExPEC).